Here is a 133-residue protein sequence, read N- to C-terminus: Fatty acid-binding protein, heart (133 aa).

Position 2 is an N-acetylvaline (valine 2). Phosphothreonine is present on threonine 8. Tyrosine 20 is modified (phosphotyrosine; by Tyr-kinases). Position 23 is a phosphoserine (serine 23). Phosphothreonine is present on threonine 30. Serine 83 bears the Phosphoserine mark. A (9Z)-octadecenoate-binding site is contributed by 127-129 (RTY). Residue 127-129 (RTY) participates in hexadecanoate binding. 127 to 129 (RTY) provides a ligand contact to octadecanoate.

The protein belongs to the calycin superfamily. Fatty-acid binding protein (FABP) family.

The protein resides in the cytoplasm. Functionally, FABPs are thought to play a role in the intracellular transport of long-chain fatty acids and their acyl-CoA esters. This chain is Fatty acid-binding protein, heart (FABP3), found in Bos mutus grunniens (Wild yak).